We begin with the raw amino-acid sequence, 113 residues long: U11-theraphotoxin-Hhn1a (113 aa).

The N-terminal stretch at 1–21 is a signal peptide; that stretch reads MNTVRVTFLLVFVLAVSLGQA. The propeptide occupies 22 to 74; sequence DKDENRMEMQEKTEQGKSYLDFAENLLLQKLEELEAKLPEEDSEESRNSRQKR. A compositionally biased stretch (basic and acidic residues) spans 58–69; the sequence is KLPEEDSEESRN. Residues 58 to 82 are disordered; it reads KLPEEDSEESRNSRQKRCIGEGVPC. Intrachain disulfides connect cysteine 75–cysteine 90, cysteine 82–cysteine 95, and cysteine 89–cysteine 110.

Belongs to the neurotoxin 14 (magi-1) family. 01 (HNTX-16) subfamily. In terms of tissue distribution, expressed by the venom gland.

It localises to the secreted. In terms of biological role, probable ion channel inhibitor. The chain is U11-theraphotoxin-Hhn1a from Cyriopagopus hainanus (Chinese bird spider).